The sequence spans 442 residues: D-serine dehydratase (442 aa).

Lysine 118 carries the post-translational modification N6-(pyridoxal phosphate)lysine.

This sequence belongs to the serine/threonine dehydratase family. DsdA subfamily. Monomer. Pyridoxal 5'-phosphate serves as cofactor.

The catalysed reaction is D-serine = pyruvate + NH4(+). This is D-serine dehydratase from Shigella dysenteriae serotype 1 (strain Sd197).